The chain runs to 299 residues: N-acetylmuramic acid 6-phosphate etherase (299 aa).

Residues 55 to 218 (CINCLEKNGR…STTVMVKMGK (164 aa)) form the SIS domain. The active-site Proton donor is Glu-83. Residue Glu-114 is part of the active site.

It belongs to the GCKR-like family. MurNAc-6-P etherase subfamily. In terms of assembly, homodimer.

The catalysed reaction is N-acetyl-D-muramate 6-phosphate + H2O = N-acetyl-D-glucosamine 6-phosphate + (R)-lactate. The protein operates within amino-sugar metabolism; N-acetylmuramate degradation. Its function is as follows. Specifically catalyzes the cleavage of the D-lactyl ether substituent of MurNAc 6-phosphate, producing GlcNAc 6-phosphate and D-lactate. The polypeptide is N-acetylmuramic acid 6-phosphate etherase (Pseudothermotoga lettingae (strain ATCC BAA-301 / DSM 14385 / NBRC 107922 / TMO) (Thermotoga lettingae)).